The primary structure comprises 318 residues: Acetyl-coenzyme A carboxylase carboxyl transferase subunit alpha (318 aa).

The CoA carboxyltransferase C-terminal domain occupies 32-293 (NLSDELERLR…KERLVSQLDR (262 aa)).

It belongs to the AccA family. As to quaternary structure, acetyl-CoA carboxylase is a heterohexamer composed of biotin carboxyl carrier protein (AccB), biotin carboxylase (AccC) and two subunits each of ACCase subunit alpha (AccA) and ACCase subunit beta (AccD).

It is found in the cytoplasm. The enzyme catalyses N(6)-carboxybiotinyl-L-lysyl-[protein] + acetyl-CoA = N(6)-biotinyl-L-lysyl-[protein] + malonyl-CoA. It functions in the pathway lipid metabolism; malonyl-CoA biosynthesis; malonyl-CoA from acetyl-CoA: step 1/1. Its function is as follows. Component of the acetyl coenzyme A carboxylase (ACC) complex. First, biotin carboxylase catalyzes the carboxylation of biotin on its carrier protein (BCCP) and then the CO(2) group is transferred by the carboxyltransferase to acetyl-CoA to form malonyl-CoA. In Saccharophagus degradans (strain 2-40 / ATCC 43961 / DSM 17024), this protein is Acetyl-coenzyme A carboxylase carboxyl transferase subunit alpha.